Reading from the N-terminus, the 490-residue chain is Polyamine transporter RMV1 (490 aa).

A compositionally biased stretch (polar residues) spans 1–21 (MTELSSPNLDSASQKPRISTE). The tract at residues 1–38 (MTELSSPNLDSASQKPRISTENPPPPPPHISIGVTTGD) is disordered. Transmembrane regions (helical) follow at residues 53–73 (ITVLPLVFLIFYEVSGGPFGI), 83–103 (LLAIVGFIVFPFIWSIPEALI), 116–136 (GYVVWVTLAMGPYWGFQQGWV), 160–180 (IPILGSGIPRVAAILVLTVAL), 188–208 (LSIVGVAAVLLGVFSILPFVV), 231–248 (GVNWSLYLNTLFWNLNYW), 273–293 (LLLVVFSYIFPVLTGTGAIAL), 303–323 (FADIGKVIGGVWLGWWIQAAA), 363–383 (TPWVGILFSASGVIILSWLSF), 386–406 (IVAAENLLYCFGMVLEFITFV), 425–445 (VLGSVLMCIPPTVLIGVIMAF), and 448–468 (LKVALVSLAAIVIGLVLQPCL).

Belongs to the amino acid-polyamine-organocation (APC) superfamily. Polyamine:cation symporter (PHS) (TC 2.A.3.12) family.

The protein localises to the cell membrane. In terms of biological role, cell membrane polyamine/proton symporter involved in the polyamine uptake in cells. Possesses high affinity for spermine and spermidine and lower affinity for putrescine. Transports paraquat, a polyamine analog, and thus confers sensitivity to this chemical which is used as a herbicide. The chain is Polyamine transporter RMV1 (RMV1) from Arabidopsis thaliana (Mouse-ear cress).